We begin with the raw amino-acid sequence, 674 residues long: Electrogenic aspartate/glutamate antiporter SLC25A13, mitochondrial (674 aa).

Alanine 2 is modified (N-acetylalanine). Residues 2–295 form a regulatory N-terminal domain region; it reads AAAKVALTKR…TLADIERIAP (294 aa). The Mitochondrial intermembrane segment spans residues 2-331; that stretch reads AAAKVALTKR…LLQVAESAYR (330 aa). EF-hand domains follow at residues 51-86, 87-122, 123-157, and 158-193; these read SQPN…SVLC, APDA…TTIH, QHIP…FLLE, and IQLE…IRPH. Positions 66, 68, 70, 72, and 77 each coordinate Ca(2+). The interval 296–311 is linker loop domain; the sequence is LEEGTLPFNLAEAQRQ. The tract at residues 321 to 611 is carrier domain; sequence VLLQVAESAY…LQRWFYIDFG (291 aa). Solcar repeat units lie at residues 326 to 418, 426 to 510, and 518 to 605; these read AESA…VRDK, VPLA…ARAS, and VSPG…LQRW. Residues 332–349 traverse the membrane as a helical segment; the sequence is FGLGSVAGAVGATAVYPI. Topologically, residues 350–392 are mitochondrial matrix; sequence DLVKTRMQNQRSTGSFVGELMYKNSFDCFKKVLRYEGFFGLYR. N6-acetyllysine occurs at positions 353 and 372. Residues 393-412 traverse the membrane as a helical segment; it reads GLLPQLLGVAPEKAIKLTVN. Over 413-435 the chain is Mitochondrial intermembrane; the sequence is DFVRDKFMHKDGSVPLAAEILAG. A helical transmembrane segment spans residues 436 to 449; the sequence is GCAGGSQVIFTNPL. Residues 450–484 lie on the Mitochondrial matrix side of the membrane; it reads EIVKIRLQVAGEITTGPRVSALSVVRDLGFFGIYK. Lysine 453 is modified (N6-methyllysine). Lysine 484 is modified (N6-acetyllysine; alternate). N6-succinyllysine; alternate is present on lysine 484. Residues 485 to 504 traverse the membrane as a helical segment; it reads GAKACFLRDIPFSAIYFPCY. Topologically, residues 505–523 are mitochondrial intermembrane; the sequence is AHARASFANEDGQVSPGSL. The helical transmembrane segment at 524-541 threads the bilayer; that stretch reads LLAGAIAGMPAASLVTPA. The Mitochondrial matrix portion of the chain corresponds to 542–580; sequence DVIKTRLQVAARAGQTTYSGVIDCFKKILREEGPKALWK. Residue lysine 580 is modified to N6-succinyllysine. A helical transmembrane segment spans residues 581-599; sequence GAARVFRSSPQFGVTLLTY. At 600–674 the chain is on the mitochondrial intermembrane side; that stretch reads ELLQRWFYID…PTSEAIGGGP (75 aa). The interval 612–674 is C-terminal domain; that stretch reads GVKPMGSEPV…PTSEAIGGGP (63 aa). Lysine 661 carries the N6-acetyllysine modification.

Belongs to the mitochondrial carrier (TC 2.A.29) family. In terms of assembly, homodimer (via N-terminus).

The protein localises to the mitochondrion inner membrane. The catalysed reaction is L-aspartate(in) + L-glutamate(out) + H(+)(out) = L-aspartate(out) + L-glutamate(in) + H(+)(in). The enzyme catalyses 3-sulfino-L-alanine(out) + L-glutamate(in) + H(+)(in) = 3-sulfino-L-alanine(in) + L-glutamate(out) + H(+)(out). It catalyses the reaction 3-sulfino-L-alanine(out) + L-aspartate(in) = 3-sulfino-L-alanine(in) + L-aspartate(out). Mitochondrial electrogenic aspartate/glutamate antiporter that favors efflux of aspartate and entry of glutamate and proton within the mitochondria as part of the malate-aspartate shuttle. Also mediates the uptake of L-cysteinesulfinate (3-sulfino-L-alanine) by mitochondria in exchange of L-glutamate and proton. Can also exchange L-cysteinesulfinate with aspartate in their anionic form without any proton translocation. Lacks transport activity towards gamma-aminobutyric acid (GABA). The sequence is that of Electrogenic aspartate/glutamate antiporter SLC25A13, mitochondrial from Macaca fascicularis (Crab-eating macaque).